A 393-amino-acid chain; its full sequence is uncharacterized protein (393 aa).

67–74 provides a ligand contact to ATP; the sequence is GPDGMGKS.

This is an uncharacterized protein from Mycobacterium tuberculosis (strain CDC 1551 / Oshkosh).